The chain runs to 549 residues: Oxygen-dependent choline dehydrogenase (549 aa).

Position 4–33 (aspartate 4–glutamate 33) interacts with FAD. The active-site Proton acceptor is histidine 465.

The protein belongs to the GMC oxidoreductase family. The cofactor is FAD.

It carries out the reaction choline + A = betaine aldehyde + AH2. It catalyses the reaction betaine aldehyde + NAD(+) + H2O = glycine betaine + NADH + 2 H(+). It participates in amine and polyamine biosynthesis; betaine biosynthesis via choline pathway; betaine aldehyde from choline (cytochrome c reductase route): step 1/1. Functionally, involved in the biosynthesis of the osmoprotectant glycine betaine. Catalyzes the oxidation of choline to betaine aldehyde and betaine aldehyde to glycine betaine at the same rate. The polypeptide is Oxygen-dependent choline dehydrogenase (Brucella melitensis biotype 1 (strain ATCC 23456 / CCUG 17765 / NCTC 10094 / 16M)).